The primary structure comprises 308 residues: Pycsar effector protein PaPycTIR (308 aa).

54–143 (LITEDAEDSE…RQVTRQLVDR (90 aa)) is an a nucleoside 3',5'-cyclic phosphate binding site. The segment at 160-278 (VFIICSVEAL…DLKGLTTIGY (119 aa)) is TIR-like.

It localises to the cytoplasm. The enzyme catalyses NAD(+) + H2O = ADP-D-ribose + nicotinamide + H(+). Functionally, pycsar (pyrimidine cyclase system for antiphage resistance) provides immunity against bacteriophage. The pyrimidine cyclase (PycC) synthesizes cyclic nucleotides in response to infection; these serve as specific second messenger signals. The signals activate the adjacent effector, leading to bacterial cell death and abortive phage infection. A clade A Pycsar system. Its function is as follows. The effector gene of a two-gene Pycsar system. Expression of this and adjacent uridylate cyclase PaPycC (AC P0DV40) probably confers resistance to bacteriophage. The genes are probably only expressed in response to bacteriophage infection. Probably only responds to cUMP (produced by its cognate NTP cyclase), acts by depleting cellular NAD(+) levels. The sequence is that of Pycsar effector protein PaPycTIR from Pseudomonas aeruginosa.